Here is a 910-residue protein sequence, read N- to C-terminus: Protein translocase subunit SecA (910 aa).

Residues Gln-89, 107–111, and Asp-502 each bind ATP; that span reads GEGKT. Residues Cys-894, Cys-896, Cys-905, and His-906 each contribute to the Zn(2+) site.

The protein belongs to the SecA family. As to quaternary structure, monomer and homodimer. Part of the essential Sec protein translocation apparatus which comprises SecA, SecYEG and auxiliary proteins SecDF-YajC and YidC. Zn(2+) serves as cofactor.

The protein localises to the cell inner membrane. It localises to the cytoplasm. The catalysed reaction is ATP + H2O + cellular proteinSide 1 = ADP + phosphate + cellular proteinSide 2.. Functionally, part of the Sec protein translocase complex. Interacts with the SecYEG preprotein conducting channel. Has a central role in coupling the hydrolysis of ATP to the transfer of proteins into and across the cell membrane, serving both as a receptor for the preprotein-SecB complex and as an ATP-driven molecular motor driving the stepwise translocation of polypeptide chains across the membrane. The sequence is that of Protein translocase subunit SecA from Chelativorans sp. (strain BNC1).